The chain runs to 406 residues: D-alanyl-D-alanine carboxypeptidase (406 aa).

The signal sequence occupies residues 1 to 31 (MVSGTVGRGTALGAVLLALLAVPAQAGTAAA). Ser93 serves as the catalytic Acyl-ester intermediate. Substrate contacts are provided by residues 151 to 154 (FAQT), 190 to 192 (YSN), Arg316, 330 to 332 (TGT), and 357 to 358 (SN). Positions 381–406 (AKLRSATSSATTVERHEDIAPGIARD) are excised as a propeptide. Residues 387-406 (TSSATTVERHEDIAPGIARD) form a disordered region. A compositionally biased stretch (basic and acidic residues) spans 393-406 (VERHEDIAPGIARD).

The protein belongs to the peptidase S12 family.

The protein localises to the secreted. The enzyme catalyses Preferential cleavage: (Ac)2-L-Lys-D-Ala-|-D-Ala. Also transpeptidation of peptidyl-alanyl moieties that are N-acyl substituents of D-alanine.. Its pathway is cell wall biogenesis; peptidoglycan biosynthesis. Catalyzes distinct carboxypeptidation and transpeptidation reactions during the last stages of wall peptidoglycan synthesis. Mistaking a beta-lactam antibiotic molecule for a normal substrate (i.e. a D-alanyl-D-alanine-terminated peptide), it becomes immobilized in the form of a long-lived, serine-ester-linked acyl enzyme and thus behave as penicillin-binding protein (PBP). In Streptomyces sp. (strain R61), this protein is D-alanyl-D-alanine carboxypeptidase.